Here is a 373-residue protein sequence, read N- to C-terminus: Response regulator aspartate phosphatase J (373 aa).

TPR repeat units follow at residues 99–135 (YYFYYFRGMYEFKQKNFILAIDHYKHAEEKLEYVEDE) and 146–179 (AEVYYHIKQTYFSMNYASQALDIYTKYELYGRRR). 11 residues coordinate L-glutamyl-L-arginyl-glycyl-L-methionyl-L-threonine: glutamate 147, tyrosine 150, glutamine 181, aspartate 192, tyrosine 217, asparagine 225, histidine 228, glutamine 260, tyrosine 297, lysine 300, and aspartate 335. TPR repeat units follow at residues 220 to 253 (AAAYYNVGHCKYSLGDYKEAEGYFKTAAAIFEEH) and 259 to 292 (VQAVFSLTHIYCKEGKYDKAVEAYDRGIKSAAEW). The TPR 5 repeat unit spans residues 334–367 (EDLLHDTAERFNQLEHYESAAFFYRRLMNIKKKL).

This sequence belongs to the Rap family. In terms of assembly, monomer in solution. Homodimer.

The protein resides in the cytoplasm. Inhibited in vitro by the competence and sporulation stimulating factor (CSF), encoded by phrC. However, CSF has at least three targets (RapB, RapC, and RapJ) and the physiological importance of RapJ inhibition by CSF is unknown. Interaction with CSF induces a conformational change in RapJ. Its function is as follows. Involved in the regulation of sporulation. Acts as a phosphatase that specifically dephosphorylates the sporulation initiation phosphotransferase Spo0F and inhibits its activity. This Bacillus subtilis (strain 168) protein is Response regulator aspartate phosphatase J (rapJ).